The sequence spans 356 residues: Torsin-like protein (356 aa).

A signal peptide spans 1–18 (MKLDYVLLLLFHLCFVNT). 110–117 (GYTGSGKN) is a binding site for ATP. Residues N125 and N250 are each glycosylated (N-linked (GlcNAc...) asparagine).

It belongs to the ClpA/ClpB family. Torsin subfamily.

The protein resides in the endoplasmic reticulum lumen. Its function is as follows. May serve as a molecular chaperone assisting in the proper folding of secreted and/or membrane proteins. This is Torsin-like protein (ooc-5) from Caenorhabditis elegans.